We begin with the raw amino-acid sequence, 186 residues long: Peptidyl-tRNA hydrolase (186 aa).

Residue Y16 participates in tRNA binding. H21 functions as the Proton acceptor in the catalytic mechanism. The tRNA site is built by Y60 and N62.

The protein belongs to the PTH family. As to quaternary structure, monomer.

The protein resides in the cytoplasm. The catalysed reaction is an N-acyl-L-alpha-aminoacyl-tRNA + H2O = an N-acyl-L-amino acid + a tRNA + H(+). In terms of biological role, hydrolyzes ribosome-free peptidyl-tRNAs (with 1 or more amino acids incorporated), which drop off the ribosome during protein synthesis, or as a result of ribosome stalling. Catalyzes the release of premature peptidyl moieties from peptidyl-tRNA molecules trapped in stalled 50S ribosomal subunits, and thus maintains levels of free tRNAs and 50S ribosomes. The polypeptide is Peptidyl-tRNA hydrolase (Tropheryma whipplei (strain TW08/27) (Whipple's bacillus)).